A 56-amino-acid polypeptide reads, in one-letter code: Ovomucoid (56 aa).

One can recognise a Kazal-like domain in the interval 6-56 (VDCSEYPKPECTAEERPICGSDNKTYGNKCNFCNAVVESNGTLTLRNFGKC). Intrachain disulfides connect Cys-8–Cys-38, Cys-16–Cys-35, and Cys-24–Cys-56. Asn-45 carries an N-linked (GlcNAc...) asparagine glycan.

The protein localises to the secreted. The sequence is that of Ovomucoid from Bambusicola thoracicus (Chinese bamboo-partridge).